A 192-amino-acid chain; its full sequence is Phosphoheptose isomerase (192 aa).

In terms of domain architecture, SIS spans I37–V192. N52–G54 lines the substrate pocket. Residues H61 and E65 each contribute to the Zn(2+) site. Residues E65, N93 to D94, S119 to S121, S124, and Q172 each bind substrate. Zn(2+)-binding residues include Q172 and H180.

It belongs to the SIS family. GmhA subfamily. Homotetramer. Zn(2+) is required as a cofactor.

The protein resides in the cytoplasm. The catalysed reaction is 2 D-sedoheptulose 7-phosphate = D-glycero-alpha-D-manno-heptose 7-phosphate + D-glycero-beta-D-manno-heptose 7-phosphate. Its pathway is carbohydrate biosynthesis; D-glycero-D-manno-heptose 7-phosphate biosynthesis; D-glycero-alpha-D-manno-heptose 7-phosphate and D-glycero-beta-D-manno-heptose 7-phosphate from sedoheptulose 7-phosphate: step 1/1. In terms of biological role, catalyzes the isomerization of sedoheptulose 7-phosphate in D-glycero-D-manno-heptose 7-phosphate. The chain is Phosphoheptose isomerase from Tolumonas auensis (strain DSM 9187 / NBRC 110442 / TA 4).